The primary structure comprises 225 residues: Uracil-DNA glycosylase (225 aa).

The active-site Proton acceptor is Asp65.

The protein belongs to the uracil-DNA glycosylase (UDG) superfamily. UNG family.

Its subcellular location is the cytoplasm. The enzyme catalyses Hydrolyzes single-stranded DNA or mismatched double-stranded DNA and polynucleotides, releasing free uracil.. In terms of biological role, excises uracil residues from the DNA which can arise as a result of misincorporation of dUMP residues by DNA polymerase or due to deamination of cytosine. In Bacillus cereus (strain AH187), this protein is Uracil-DNA glycosylase.